A 223-amino-acid chain; its full sequence is UPF0758 protein FMG_0357 (223 aa).

Residues 101–223 enclose the MPN domain; the sequence is SLNDPDSVAE…SLSMRKGMYF (123 aa). Zn(2+) is bound by residues histidine 172, histidine 174, and aspartate 185. A JAMM motif motif is present at residues 172 to 185; it reads HNHPSGSLIPSNAD.

The protein belongs to the UPF0758 family.

In Finegoldia magna (strain ATCC 29328 / DSM 20472 / WAL 2508) (Peptostreptococcus magnus), this protein is UPF0758 protein FMG_0357.